Consider the following 33-residue polypeptide: Brevinin-2Eb (33 aa).

Cysteine 27 and cysteine 33 are oxidised to a cystine.

It belongs to the frog skin active peptide (FSAP) family. Brevinin subfamily. Expressed by the skin glands.

It localises to the secreted. In terms of biological role, shows antibacterial activity against representative Gram-negative and Gram-positive bacterial species, and hemolytic activity. The chain is Brevinin-2Eb from Pelophylax lessonae (Pool frog).